The sequence spans 316 residues: tRNA dimethylallyltransferase (316 aa).

17-24 (GPTASGKT) contributes to the ATP binding site. Position 19-24 (19-24 (TASGKT)) interacts with substrate. 4 interaction with substrate tRNA regions span residues 42–45 (DSAL), 166–170 (QRLSR), 247–252 (RCVGYR), and 280–287 (KRQITWLR).

This sequence belongs to the IPP transferase family. In terms of assembly, monomer. Requires Mg(2+) as cofactor.

It carries out the reaction adenosine(37) in tRNA + dimethylallyl diphosphate = N(6)-dimethylallyladenosine(37) in tRNA + diphosphate. Its function is as follows. Catalyzes the transfer of a dimethylallyl group onto the adenine at position 37 in tRNAs that read codons beginning with uridine, leading to the formation of N6-(dimethylallyl)adenosine (i(6)A). In Escherichia fergusonii (strain ATCC 35469 / DSM 13698 / CCUG 18766 / IAM 14443 / JCM 21226 / LMG 7866 / NBRC 102419 / NCTC 12128 / CDC 0568-73), this protein is tRNA dimethylallyltransferase.